Reading from the N-terminus, the 113-residue chain is Hydrogenase maturation factor HypA (113 aa).

Residue His2 coordinates Ni(2+). Residues Cys70, Cys73, Cys86, and Cys88 each coordinate Zn(2+).

This sequence belongs to the HypA/HybF family.

Functionally, involved in the maturation of [NiFe] hydrogenases. Required for nickel insertion into the metal center of the hydrogenase. This is Hydrogenase maturation factor HypA from Nostoc sp. (strain PCC 7120 / SAG 25.82 / UTEX 2576).